The sequence spans 547 residues: GID complex substrate-recognition subunit 10 (547 aa).

Polar residues-rich tracts occupy residues 1–11 (MPRSLDNFQNE) and 28–41 (GFPN…SNSQ). 4 disordered regions span residues 1-42 (MPRS…NSQR), 60-115 (EQDS…SNAT), 169-217 (RNSS…NPQS), and 285-313 (PAVL…QTPN). The span at 99-108 (SASRQRRRSG) shows a compositional bias: basic residues. A compositionally biased stretch (polar residues) spans 169-185 (RNSSTFGSNPNSVFSAQ). Composition is skewed to low complexity over residues 186-199 (PTEP…SSFP), 207-217 (SRSISISNPQS), and 298-307 (SSSSASSYGS).

The protein belongs to the GID4/VID24 family. In terms of assembly, substrate-recognition component of the GID/CTLH complex. In the absence of stress, the complex exists as an inactive anticipatory complex (GID(Ant)), composed of Gid1, the E3 ubiquitin-ligase Gid2, Gid5, Gid8, and the RING-like subunit Gid9, awaiting a substrate receptor to form the active E3 ligase complex. When cells are shifted to glucose-containing medium, the substrate receptor Gid4 is induced and becomes part of the complex, named GID(SR4). Additionally, Gid7 transforms the GID(SR4) E3 ligase core into a higher-order supramolecular assembly (Chelator-GID(SR4)). Under osmotic or heat stress, the substrate receptor Gid10 is induced and becomes part of the complex, named GID(SR10). Interacts with proteins that have an N-terminal Pro/N-degron.

Its subcellular location is the nucleus. Its function is as follows. Substrate-recognition component of the GID E3 ligase complex recruiting N termini and catalyzing ubiquitination of proteins targeted for degradation. GID E3 is regulated through assembly with interchangeable N-degron-binding substrate receptors induced by distinct environmental perturbations. Required for the adaptation to osmotic or heat stress. Specific for substrates with an N-terminal Pro (Pro/N-degron). The sequence is that of GID complex substrate-recognition subunit 10 (gid10) from Schizosaccharomyces pombe (strain 972 / ATCC 24843) (Fission yeast).